A 572-amino-acid polypeptide reads, in one-letter code: Glutathione hydrolase 1 (572 aa).

Residues 1 to 22 form the signal peptide; that stretch reads MSLVRTVTIVLFIIAFLQNAAA. Residue Arg-99 coordinates L-glutamate. N-linked (GlcNAc...) asparagine glycosylation is found at Asn-171 and Asn-222. The active-site Nucleophile is Thr-368. L-glutamate is bound by residues Thr-386, Asn-388, Glu-407, Asp-410, 440 to 441, and 461 to 462; these read SS and GG. N-linked (GlcNAc...) asparagine glycosylation is present at Asn-505. The disordered stretch occupies residues 552–572; the sequence is GGRSELVAVSDPRKGGFPSGY.

This sequence belongs to the gamma-glutamyltransferase family. As to expression, expressed in embryo, roots and leaves. In mature plants, expression is restricted to vascular tissues of roots, leaves, flowers and siliques.

The protein localises to the secreted. The protein resides in the extracellular space. Its subcellular location is the apoplast. The enzyme catalyses an N-terminal (5-L-glutamyl)-[peptide] + an alpha-amino acid = 5-L-glutamyl amino acid + an N-terminal L-alpha-aminoacyl-[peptide]. It catalyses the reaction glutathione + H2O = L-cysteinylglycine + L-glutamate. The catalysed reaction is an S-substituted glutathione + H2O = an S-substituted L-cysteinylglycine + L-glutamate. It participates in sulfur metabolism; glutathione metabolism. Functionally, may play a role in preventing oxidative stress by metabolizing extracellular oxidized glutathione (GSSG). The polypeptide is Glutathione hydrolase 1 (GGT1) (Arabidopsis thaliana (Mouse-ear cress)).